We begin with the raw amino-acid sequence, 333 residues long: Glycogenin-1 (333 aa).

The residue at position 2 (T2) is an N-acetylthreonine. The UDP site is built by L9, T11, N12, and Y15. L9, T11, N12, and Y15 together coordinate UDP-alpha-D-glucose. At S44 the chain carries Phosphoserine; by PKA; in vitro. UDP is bound at residue R77. 10 residues coordinate UDP-alpha-D-glucose: R77, K86, D102, A103, D104, N133, S134, D160, D163, and Q164. UDP contacts are provided by D102, A103, and D104. A Mn(2+)-binding site is contributed by D102. Position 104 (D104) interacts with Mn(2+). The O-linked (Glc...) tyrosine glycan is linked to Y195. Positions 212, 215, and 218 each coordinate UDP. H212 contributes to the Mn(2+) binding site. UDP-alpha-D-glucose contacts are provided by G215 and K218. The interval 284–316 is interaction with GYS1; sequence SHLSLGETPATTQPFVSSEERKERWEQGQADYM.

It belongs to the glycosyltransferase 8 family. Glycogenin subfamily. Part of the GYS1-GYG1 complex, a heterooctamer composed of a tetramer of GYS1 and 2 dimers of GYG1, where each GYS1 protomer binds to one GYG1 subunit (via GYG1 C-terminus); the GYS1 tetramer may dissociate from GYG1 dimers to continue glycogen polymerization on its own. May also form a heterooctamer complex with GYS2 (via GYG1 C-terminus). It depends on Mn(2+) as a cofactor. Post-translationally, self-glycosylated by the transfer of glucose residues from UDP-glucose to itself, forming an alpha-1,4-glycan of around 10 residues attached to Tyr-195. In terms of processing, phosphorylated. In terms of tissue distribution, detected in heart, skeletal muscle, brain and testis, and at lower levels in kidney.

The protein resides in the cytoplasm. It is found in the nucleus. It carries out the reaction L-tyrosyl-[glycogenin] + UDP-alpha-D-glucose = alpha-D-glucosyl-L-tyrosyl-[glycogenin] + UDP + H(+). It catalyses the reaction [1,4-alpha-D-glucosyl](n)-L-tyrosyl-[glycogenin] + UDP-alpha-D-glucose = [1,4-alpha-D-glucosyl](n+1)-L-tyrosyl-[glycogenin] + UDP + H(+). Its pathway is glycan biosynthesis; glycogen biosynthesis. Functionally, glycogenin participates in the glycogen biosynthetic process along with glycogen synthase and glycogen branching enzyme. It catalyzes the formation of a short alpha (1,4)-glucosyl chain covalently attached via a glucose 1-O-tyrosyl linkage to internal tyrosine residues and these chains act as primers for the elongation reaction catalyzed by glycogen synthase. The protein is Glycogenin-1 (GYG1) of Oryctolagus cuniculus (Rabbit).